Here is a 671-residue protein sequence, read N- to C-terminus: Copper amine oxidase 1 (671 aa).

Positions Pro3–His106 are N2. Positions Ala107–Glu211 are N3. Position 319–330 (Ala319–Met330) interacts with substrate. Asp321 (proton acceptor) is an active-site residue. Cys340 and Cys366 are joined by a disulfide. Leu402–Tyr407 is a substrate binding site. Tyr405 acts as the Schiff-base intermediate with substrate; via topaquinone in catalysis. Tyr405 is modified (2',4',5'-topaquinone). Cu cation is bound by residues His455 and His457. Residue Asp464 coordinates Mn(2+). Asn471 carries N-linked (GlcNAc...) asparagine glycosylation. Asp606 contributes to the Mn(2+) binding site. Cu cation is bound at residue His617.

This sequence belongs to the copper/topaquinone oxidase family. In terms of assembly, homodimer. The cofactor is Cu cation. Zn(2+) is required as a cofactor. Requires L-topaquinone as cofactor. It depends on Mn(2+) as a cofactor. In terms of processing, topaquinone (TPQ) is generated by copper-dependent autoxidation of a specific tyrosyl residue.

The enzyme catalyses histamine + O2 + H2O = imidazole-4-acetaldehyde + H2O2 + NH4(+). The protein is Copper amine oxidase 1 (AO-I) of Aspergillus niger.